We begin with the raw amino-acid sequence, 395 residues long: MAVTDSLSRAATVLATVLLLSFGSVAASHIEDQAEQFFRSGHTNNWAVLVCTSRFWFNYRHVANTLSVYRSVKRLGIPDSHIVLMLADDMACNPRNPKPATVFSHKNMELNVYGDDVEVDYRSYEVTVENFLRVLTGRIPPSTPRSKRLLSDDRSNILIYMTGHGGNGFLKFQDSEEITNIELADAFEQMWQKRRYNELLFIIDTCQGASMYERFYSPNIMALASSQVGEDSLSHQPDPAIGVHLMDRYTFYVLEFLEEINPASQTNMNDLFQVCPKSLCVSTPGHRTDLFQRDPKNVLITDFFGSVRKVEITTETIKLQQDSEIMESSYKEDQMDEKLMEPLKYAEQLPVAQIIHQKPKLKDWHPPGGFILGLWALIIMVFFKTYGIKHMKFIF.

Residues 1–27 form the signal peptide; sequence MAVTDSLSRAATVLATVLLLSFGSVAA. Topologically, residues 28 to 368 are lumenal; it reads SHIEDQAEQF…PKLKDWHPPG (341 aa). Ca(2+) contacts are provided by Asp-79, Ile-82, Glu-118, and Asp-120. His-164 functions as the Proton donor in the catalytic mechanism. The active-site Nucleophile; acyl-thioester intermediate is Cys-206. A protein contacts are provided by Cys-206, Ser-232, and Ser-234. Positions 231 to 236 are autoinhibitory loop; sequence DSLSHQ. A disulfide bridge links Cys-275 with Cys-280. A helical membrane pass occupies residues 369 to 385; it reads GFILGLWALIIMVFFKT. Over 386 to 395 the chain is Cytoplasmic; that stretch reads YGIKHMKFIF.

The protein belongs to the peptidase C13 family. Heteropentamer. Part of the GPI-anchor transamidase complex, consisting of PIGK, PIGT, PIGS, PIGU and GAA1. Interacts with GPAA1. Interacts with PIGT; this interaction, via a disulfide link, stabilizes the expression of GAA1 and PIGK and links them to PIGS. The disulfide bond between PIGK/GPI8 and PIGT is important for normal enzyme activity.

It is found in the endoplasmic reticulum membrane. It participates in glycolipid biosynthesis; glycosylphosphatidylinositol-anchor biosynthesis. In the absence of proproteins substrates, exists in an inactive state with a disrupted catalytic site by an autoinhibitory loop. The binding of proprotein substrates, particularly the CSP region, to GPI-T triggers concerted conformational changes that alleviate the inhibition by the autoinhibitory loop. Meanwhile, proprotein residues near the omega- site induce the formation of a catalytic cleft for catalysis, following which the products are released and GPI-T reverts to the inactive state. In terms of biological role, catalytic subunit of the glycosylphosphatidylinositol-anchor (GPI-anchor) transamidase (GPI-T) complex that catalyzes the formation of the linkage between a proprotein and a GPI-anchor and participates in GPI anchored protein biosynthesis. Recognizes diverse proproteins at a C-terminal signal peptide (CSP) region that lacks consensus sequence and replaces it with a GPI-anchor via a transamidation reaction. Transamidation catalysis reaction follows a two-phase mechanism. In the acyl-enzyme phase, the carbonyl group of the proproteins's omega-site undergoes a nucleophilic attack forming an enzyme-substrate thioester bond. Followed by a general acid catalysis that allows CSP releasing, regenerating the carbonyl, and forming the acyl-enzyme intermediate. In the GPI-anchor attachment phase, the amino group of the GPI-anchor's ethanolamine phosphate, the one on third mannose (EtNP3), mediates a nucleophilic attack on the carbonyl of the acyl-enzyme intermediate, replacing the CSP, allowing GPI-anchor attachment to the omega-residue, therefore forming the product and freeing the enzyme. The chain is GPI-anchor transamidase from Homo sapiens (Human).